The primary structure comprises 1336 residues: Misshapen-like kinase 1 (1336 aa).

The region spanning 25-289 (FELVEVVGNG…TEQLLKFPFI (265 aa)) is the Protein kinase domain. ATP is bound by residues 31–39 (VGNGTYGQV) and Lys54. Catalysis depends on Asp153, which acts as the Proton acceptor. Disordered stretches follow at residues 299-347 (RIQL…NVPG), 363-383 (KSNS…QRDP), and 395-890 (QRRI…GGTM). Over residues 317–333 (EETEYEYSGSEEEDDSH) the composition is skewed to acidic residues. Ser324 and Ser326 each carry phosphoserine. The span at 371-380 (QQQQLQQQQQ) shows a compositional bias: low complexity. A compositionally biased stretch (basic and acidic residues) spans 396–466 (RRIEEQKEER…EEQRQSERLQ (71 aa)). Positions 479 to 496 (QKQQQQQQQQQQQQQQQQ) are enriched in low complexity. 2 positions are modified to omega-N-methylarginine: Arg502 and Arg510. A compositionally biased stretch (basic and acidic residues) spans 519 to 529 (AWAREVEERAR). The span at 531–544 (NKQQNSPLAKTKPS) shows a compositional bias: polar residues. Residues 548–562 (PEPPIPQASPSPPGP) are compositionally biased toward pro residues. Positions 599-609 (RSQSLQDQPTR) are enriched in polar residues. Residues 622 to 632 (PAAVPTPTATP) are compositionally biased toward low complexity. At Ser643 the chain carries Phosphoserine. A compositionally biased stretch (polar residues) spans 672–684 (QRTSSIATALNTS). Position 703 is a phosphoserine (Ser703). Residues 718 to 731 (PKPPGPPAQPPGPP) are compositionally biased toward pro residues. Over residues 738-750 (DLRRSDPGWERSD) the composition is skewed to basic and acidic residues. Phosphoserine is present on residues Ser756, Ser765, Ser781, Ser782, and Ser786. A compositionally biased stretch (basic and acidic residues) spans 808-825 (LLKERTLDEAPKPPKKAM). Over residues 832 to 848 (EEVESSEDEEEEGDGEP) the composition is skewed to acidic residues. Residues 870-1336 (MVVHDVEEVS…TLNRNCIMNW (467 aa)) are mediates interaction with RAP2A. At Thr895 the chain carries Phosphothreonine. Residues 909 to 946 (GYTNLPDVVQPSHSPTENSQGQSPPTKDGGGDYQSRGL) form a disordered region. Polar residues predominate over residues 919–933 (PSHSPTENSQGQSPP). The CNH domain maps to 1023 to 1310 (NSEILCAALW…KFLCERNDKV (288 aa)).

It belongs to the protein kinase superfamily. STE Ser/Thr protein kinase family. STE20 subfamily. Interacts with RAP2A and NCK1. Interacts with TANC1. The cofactor is Mg(2+). In terms of processing, autophosphorylated.

Its subcellular location is the cytoplasm. It is found in the postsynaptic density. The protein resides in the cell projection. It localises to the axon. The protein localises to the dendrite. It catalyses the reaction L-seryl-[protein] + ATP = O-phospho-L-seryl-[protein] + ADP + H(+). The enzyme catalyses L-threonyl-[protein] + ATP = O-phospho-L-threonyl-[protein] + ADP + H(+). Serine/threonine kinase which acts as a negative regulator of Ras-related Rap2-mediated signal transduction to control neuronal structure and AMPA receptor trafficking. Required for normal synaptic density, dendrite complexity, as well as surface AMPA receptor expression in hippocampal neurons. Can activate the JNK and MAPK14/p38 pathways and mediates stimulation of the stress-activated protein kinase MAPK14/p38 MAPK downstream of the Raf/ERK pathway. Phosphorylates TANC1 upon stimulation by RAP2A, MBP and SMAD1. Has an essential function in negative selection of thymocytes, perhaps by coupling NCK1 to activation of JNK1. Activator of the Hippo signaling pathway which plays a pivotal role in organ size control and tumor suppression by restricting proliferation and promoting apoptosis. MAP4Ks act in parallel to and are partially redundant with STK3/MST2 and STK4/MST2 in the phosphorylation and activation of LATS1/2, and establish MAP4Ks as components of the expanded Hippo pathway. This chain is Misshapen-like kinase 1 (Mink1), found in Rattus norvegicus (Rat).